Consider the following 990-residue polypeptide: Bifunctional glutamine synthetase adenylyltransferase/adenylyl-removing enzyme (990 aa).

Residues 1–474 (MIFSAITADL…HYAKLFEGDP (474 aa)) are adenylyl removase. Residues 478–990 (AKLPPVDYGA…FNRLIGGEDA (513 aa)) are adenylyl transferase.

This sequence belongs to the GlnE family. Requires Mg(2+) as cofactor.

The catalysed reaction is [glutamine synthetase]-O(4)-(5'-adenylyl)-L-tyrosine + phosphate = [glutamine synthetase]-L-tyrosine + ADP. It catalyses the reaction [glutamine synthetase]-L-tyrosine + ATP = [glutamine synthetase]-O(4)-(5'-adenylyl)-L-tyrosine + diphosphate. Its function is as follows. Involved in the regulation of glutamine synthetase GlnA, a key enzyme in the process to assimilate ammonia. When cellular nitrogen levels are high, the C-terminal adenylyl transferase (AT) inactivates GlnA by covalent transfer of an adenylyl group from ATP to specific tyrosine residue of GlnA, thus reducing its activity. Conversely, when nitrogen levels are low, the N-terminal adenylyl removase (AR) activates GlnA by removing the adenylyl group by phosphorolysis, increasing its activity. The regulatory region of GlnE binds the signal transduction protein PII (GlnB) which indicates the nitrogen status of the cell. This is Bifunctional glutamine synthetase adenylyltransferase/adenylyl-removing enzyme from Rhodopseudomonas palustris (strain TIE-1).